The chain runs to 487 residues: NADH-quinone oxidoreductase subunit N (487 aa).

A run of 13 helical transmembrane segments spans residues 18–38, 44–64, 84–104, 116–136, 169–189, 211–231, 242–262, 277–297, 305–325, 333–353, 377–397, 410–430, and 457–477; these read LVPE…DLFV, VWTH…LATG, VMKT…WTYL, VLVL…SLLM, FVLG…VYGA, LLTG…AAPF, APAP…FGMA, WHLL…LMAI, MLAY…AGGG, MFYA…IIAL, AGLV…LGFW, DMLW…YYYL, and VLGV…PIMV.

This sequence belongs to the complex I subunit 2 family. NDH-1 is composed of 14 different subunits. Subunits NuoA, H, J, K, L, M, N constitute the membrane sector of the complex.

Its subcellular location is the cell inner membrane. The enzyme catalyses a quinone + NADH + 5 H(+)(in) = a quinol + NAD(+) + 4 H(+)(out). Functionally, NDH-1 shuttles electrons from NADH, via FMN and iron-sulfur (Fe-S) centers, to quinones in the respiratory chain. The immediate electron acceptor for the enzyme in this species is believed to be ubiquinone. Couples the redox reaction to proton translocation (for every two electrons transferred, four hydrogen ions are translocated across the cytoplasmic membrane), and thus conserves the redox energy in a proton gradient. This is NADH-quinone oxidoreductase subunit N from Xanthomonas euvesicatoria pv. vesicatoria (strain 85-10) (Xanthomonas campestris pv. vesicatoria).